Here is a 97-residue protein sequence, read N- to C-terminus: Aspartyl/glutamyl-tRNA(Asn/Gln) amidotransferase subunit C (97 aa).

It belongs to the GatC family. In terms of assembly, heterotrimer of A, B and C subunits.

It catalyses the reaction L-glutamyl-tRNA(Gln) + L-glutamine + ATP + H2O = L-glutaminyl-tRNA(Gln) + L-glutamate + ADP + phosphate + H(+). The enzyme catalyses L-aspartyl-tRNA(Asn) + L-glutamine + ATP + H2O = L-asparaginyl-tRNA(Asn) + L-glutamate + ADP + phosphate + 2 H(+). Functionally, allows the formation of correctly charged Asn-tRNA(Asn) or Gln-tRNA(Gln) through the transamidation of misacylated Asp-tRNA(Asn) or Glu-tRNA(Gln) in organisms which lack either or both of asparaginyl-tRNA or glutaminyl-tRNA synthetases. The reaction takes place in the presence of glutamine and ATP through an activated phospho-Asp-tRNA(Asn) or phospho-Glu-tRNA(Gln). This is Aspartyl/glutamyl-tRNA(Asn/Gln) amidotransferase subunit C from Prochlorococcus marinus (strain AS9601).